We begin with the raw amino-acid sequence, 601 residues long: ATP-dependent lipid A-core flippase (601 aa).

6 helical membrane passes run 35 to 55 (FAVA…LAFL), 77 to 97 (LAII…AILM), 150 to 170 (AVTS…VIFY), 173 to 193 (WQLA…IAKF), 263 to 283 (MEFL…YQVI), and 286 to 306 (SSTP…YEPV). An ABC transmembrane type-1 domain is found at 36 to 318 (AVAMVCMLIA…LTNVNNTIQQ (283 aa)). Residues 352-585 (IEIRNISFAY…RGEYYKLHQL (234 aa)) enclose the ABC transporter domain. ATP is bound at residue 384–391 (GMSGGGKT).

This sequence belongs to the ABC transporter superfamily. Lipid exporter (TC 3.A.1.106) family. Homodimer.

The protein resides in the cell inner membrane. The enzyme catalyses ATP + H2O + lipid A-core oligosaccharideSide 1 = ADP + phosphate + lipid A-core oligosaccharideSide 2.. In terms of biological role, involved in lipopolysaccharide (LPS) biosynthesis. Translocates lipid A-core from the inner to the outer leaflet of the inner membrane. Transmembrane domains (TMD) form a pore in the inner membrane and the ATP-binding domain (NBD) is responsible for energy generation. This is ATP-dependent lipid A-core flippase from Syntrophus aciditrophicus (strain SB).